The chain runs to 197 residues: Xanthine phosphoribosyltransferase (197 aa).

Leu20 and Asn27 together coordinate xanthine. 128–132 (ANGQA) lines the 5-phospho-alpha-D-ribose 1-diphosphate pocket. Residue Lys156 participates in xanthine binding.

The protein belongs to the purine/pyrimidine phosphoribosyltransferase family. Xpt subfamily. In terms of assembly, homodimer.

The protein localises to the cytoplasm. It catalyses the reaction XMP + diphosphate = xanthine + 5-phospho-alpha-D-ribose 1-diphosphate. It functions in the pathway purine metabolism; XMP biosynthesis via salvage pathway; XMP from xanthine: step 1/1. Functionally, converts the preformed base xanthine, a product of nucleic acid breakdown, to xanthosine 5'-monophosphate (XMP), so it can be reused for RNA or DNA synthesis. The protein is Xanthine phosphoribosyltransferase of Bacillus anthracis (strain A0248).